The sequence spans 175 residues: Transcription factor E (175 aa).

Residues 3-88 form the HTH TFE/IIEalpha-type domain; that stretch reads ENPLIQQVLF…TWKPSLEKVP (86 aa).

It belongs to the TFE family. In terms of assembly, monomer. Interaction with RNA polymerase subunits RpoF and RpoE is necessary for Tfe stimulatory transcription activity. Able to interact with Tbp and RNA polymerase in the absence of DNA promoter. Interacts both with the preinitiation and elongation complexes.

Its function is as follows. Transcription factor that plays a role in the activation of archaeal genes transcribed by RNA polymerase. Facilitates transcription initiation by enhancing TATA-box recognition by TATA-box-binding protein (Tbp), and transcription factor B (Tfb) and RNA polymerase recruitment. Not absolutely required for transcription in vitro, but particularly important in cases where Tbp or Tfb function is not optimal. It dynamically alters the nucleic acid-binding properties of RNA polymerases by stabilizing the initiation complex and destabilizing elongation complexes. Seems to translocate with the RNA polymerase following initiation and acts by binding to the non template strand of the transcription bubble in elongation complexes. This Methanococcus maripaludis (strain DSM 14266 / JCM 13030 / NBRC 101832 / S2 / LL) protein is Transcription factor E.